The following is a 281-amino-acid chain: Pantothenate synthetase (281 aa).

30 to 37 (MGALHRGH) serves as a coordination point for ATP. The active-site Proton donor is His-37. Gln-61 provides a ligand contact to (R)-pantoate. A beta-alanine-binding site is contributed by Gln-61. 147–150 (GEKD) lines the ATP pocket. (R)-pantoate is bound at residue Gln-153. Residues Ile-176 and 184-187 (LSSR) contribute to the ATP site.

Belongs to the pantothenate synthetase family. In terms of assembly, homodimer.

The protein localises to the cytoplasm. The catalysed reaction is (R)-pantoate + beta-alanine + ATP = (R)-pantothenate + AMP + diphosphate + H(+). It functions in the pathway cofactor biosynthesis; (R)-pantothenate biosynthesis; (R)-pantothenate from (R)-pantoate and beta-alanine: step 1/1. Functionally, catalyzes the condensation of pantoate with beta-alanine in an ATP-dependent reaction via a pantoyl-adenylate intermediate. The chain is Pantothenate synthetase from Porphyromonas gingivalis (strain ATCC 33277 / DSM 20709 / CIP 103683 / JCM 12257 / NCTC 11834 / 2561).